Here is a 488-residue protein sequence, read N- to C-terminus: MIPVVALVGRPNVGKSTLFNRLTRTRDALVADFPGLTRDRKYGRAFLSGYEFIVVDTGGIDGTEEGIETKMAEQSLAAIEEADVVLFMTDARAGLTAADLSIAQHLRSRQKTTFVVANKIDGIDADSACAEFWSLGLGEVYQMAAAQGRGVTNMIEYALTPYAEAMGIERQGEEEEVDERQYTEEEAEAEQKRLQDLPIKLAIIGKPNVGKSTLTNRILGEERVVVYDEPGTTRDSIYIPMERDGREYVIIDTAGVRRRSKVHEVIEKFSVIKTLKAVEDANVVLLIIDAREGIAEQDLGLLGFALNAGRALVIAVNKWDGIDQGIKDRVKSELDRRLGFIDFARIHFISALHGTGVGHLFESIEEAYDSATRRVSTSMLTRIMQMSQDDHQPPLVNGRRVKLKYAHAGGYNPPIVVIHGNQVSKLPDSYKRYMMNYFRRSLKVVGTPIQLRFQEGDNPFENKVEKLTMSQERRRKRALSHIKDRKTK.

EngA-type G domains lie at 3 to 166 (PVVA…AEAM) and 199 to 372 (IKLA…DSAT). GTP-binding positions include 9–16 (GRPNVGKS), 56–60 (DTGGI), 118–121 (NKID), 205–212 (GKPNVGKS), 252–256 (DTAGV), and 317–320 (NKWD). Residues 373-457 (RRVSTSMLTR…PIQLRFQEGD (85 aa)) enclose the KH-like domain.

This sequence belongs to the TRAFAC class TrmE-Era-EngA-EngB-Septin-like GTPase superfamily. EngA (Der) GTPase family. As to quaternary structure, associates with the 50S ribosomal subunit.

Functionally, GTPase that plays an essential role in the late steps of ribosome biogenesis. The chain is GTPase Der from Shewanella sp. (strain ANA-3).